The chain runs to 508 residues: Tyrosine decarboxylase 4 (508 aa).

An N6-(pyridoxal phosphate)lysine modification is found at lysine 318.

Belongs to the group II decarboxylase family. As to quaternary structure, homodimer. Requires pyridoxal 5'-phosphate as cofactor.

It carries out the reaction L-tyrosine + H(+) = tyramine + CO2. This is Tyrosine decarboxylase 4 (TYRDC-4) from Petroselinum crispum (Parsley).